We begin with the raw amino-acid sequence, 2431 residues long: Nucleoprotein TPR (2431 aa).

The interval 1-48 (MTSGGSASRSGHRGVPMTSRGFDGSRRGSLRRAGARETASEAADGAAP) is disordered. Residues 77 to 87 (AVLQQVLERPE) are sufficient for interaction with TPR. The interval 88-191 (LNKLPKSTQN…GIQSQFTRAK (104 aa)) is necessary for interaction with HSF1. Residues 98 to 444 (KLEKFLAEQQ…SATKRKGAIL (347 aa)) are a coiled coil. An N6-acetyllysine mark is found at Lys326, Lys386, and Lys419. At Ser453 the chain carries Phosphoserine. A coiled-coil region spans residues 486–678 (EKQENKRINK…ESRQHQMQLV (193 aa)). 3 positions are modified to N6-acetyllysine: Lys502, Lys531, and Lys551. Residues 511-587 (LKRQREEYER…LMELEEARGN (77 aa)) are necessary for association to the NPC. Ser596, Ser597, and Ser706 each carry phosphoserine. Positions 736 to 1246 (STEAIEAKAA…IEKLSDKVVT (511 aa)) form a coiled coil. Residues Lys787, Lys797, Lys822, and Lys829 each carry the N6-acetyllysine modification. Residues 989-998 (LASQSTQRTG) are compositionally biased toward polar residues. A disordered region spans residues 989 to 1011 (LASQSTQRTGKGQPGDRDDVDDL). The segment covering 1002 to 1011 (PGDRDDVDDL) has biased composition (basic and acidic residues). Phosphoserine is present on Ser1259. 2 coiled-coil regions span residues 1289–1494 (EVAQ…LDAK) and 1547–1700 (VQEM…QRDE). The segment at 1292 to 1394 (QVESLRYRQR…NAELSEKSGM (103 aa)) is necessary for interaction with HSF1. Residues 1689-1701 (EHQERHLEQRDEP) show a composition bias toward basic and acidic residues. The tract at residues 1689–1744 (EHQERHLEQRDEPQEPTNKAPEQQRQITLKTTPASGERGIASTSDPPTANIKPTPV) is disordered. Polar residues predominate over residues 1703–1722 (EPTNKAPEQQRQITLKTTPA). At Lys1760 the chain carries N6-acetyllysine. Thr1762 carries the phosphothreonine modification. Residues 1873 to 1898 (SSPVERPSTSTAVFGTVSATPSSSLP) are compositionally biased toward polar residues. Residues 1873–2193 (SSPVERPSTS…TPGIGGMQQH (321 aa)) form a disordered region. The interval 1882-1937 (STAVFGTVSATPSSSLPKRTREEEEDSTMEAGDQVSEDTVEMPLPKKLKMVTPVGT) is sufficient and essential for mediating its nuclear import. Residues 1937–1951 (TEEEVMAEESTDGEA) show a composition bias toward acidic residues. Residues 1954–1963 (QAYNQDSQDS) are compositionally biased toward polar residues. Phosphoserine is present on Ser1963. The span at 1994-2005 (QSDQQTTSSQDG) shows a compositional bias: low complexity. 2 stretches are compositionally biased toward acidic residues: residues 2016–2057 (DSDD…EDSN) and 2067–2088 (DGYE…ETEE). The segment covering 2100 to 2132 (ADSQNSGEGNTSAAESSFSQEVAREQQPTSASE) has biased composition (polar residues). Phosphoserine is present on residues Ser2102, Ser2105, Ser2116, Ser2118, and Ser2141. Omega-N-methylarginine is present on residues Arg2174 and Arg2179. A phosphothreonine mark is found at Thr2184 and Thr2205. Phosphoserine is present on Ser2223. Residue Arg2231 is modified to Omega-N-methylarginine. A compositionally biased stretch (polar residues) spans 2295-2312 (ESTTSDASEHASQSVPMV). Residues 2295–2431 (ESTTSDASEH…RGGINRGNIN (137 aa)) form a disordered region. Positions 2313-2325 (TTSTGTLSTTNET) are enriched in low complexity. Over residues 2327–2340 (AGDDGDEVFVEAES) the composition is skewed to acidic residues. Residues 2341-2351 (EGISSEAGLEI) are compositionally biased toward low complexity. A compositionally biased stretch (acidic residues) spans 2353 to 2367 (SQQEEEPVQASDESD). Residues 2368 to 2388 (LPSTSQDPPSSSSVDTSSSQP) show a composition bias toward low complexity. Arg2411, Arg2413, and Arg2422 each carry asymmetric dimethylarginine. Gly residues predominate over residues 2420 to 2431 (GGRGGINRGNIN).

This sequence belongs to the TPR family. As to quaternary structure, homodimer. Part of the nuclear pore complex (NPC). Associates with the XPO1/CRM1-mediated nuclear export complex, the Importin alpha/Importin beta receptor and the dynein 1 complex. Interacts (via C-terminal domain) with the KPNB1; the interaction occurs in a RanGTP-dependent manner. Interacts (via C-terminal region and phosphorylated form) with MAPK1/ERK2 (via phosphorylated form); the interaction requires dimerization of MAPK1/ERK2 and increases following EGF stimulation. Interacts with MAPK3/ERK1; the interaction increases following EGF stimulation. Interacts (via coiled coil region) with NUP153; the interaction is direct. Interacts with HSF1; the interaction increases in a stress-responsive manner and stimulates export of stress-induced HSP70 mRNA. Interacts with huntingtin/HTT; the interaction is inhibited by aggregated huntingtin/HTT forms with expanded polyglutamine stretch. Interacts with MAD1L1 (via N-terminal region), MAD2L1, and TTK; the interactions occurs in a microtubule-independent manner. Interacts (via middle region) with DYNLL1. Interacts with DCTN1, dynein, NUP153 and tubulin. Interacts with MTA1. Interacts with IFI204 (via C-terminal region). Interacts with IFI203. Interacts with ZC3HC1; this interaction mediates ZC3HC1 nuclear envelopes (NE)-association but also required for proper positioning of a substantial amount of TPR at the nuclear basket (NB). Phosphorylated. Phosphorylation occurs on serine and threonine residues (comprised in the C-terminal region) by MAPK1/ERK2 and stabilizes the interaction between these two proteins. Expressed in the heart, liver, kidney, spleen, lung and skeletal muscles.

It is found in the nucleus. It localises to the nucleus membrane. The protein resides in the nucleus envelope. The protein localises to the nuclear pore complex. Its subcellular location is the cytoplasm. It is found in the cytoskeleton. It localises to the spindle. The protein resides in the chromosome. The protein localises to the centromere. Its subcellular location is the kinetochore. Component of the nuclear pore complex (NPC), a complex required for the trafficking across the nuclear envelope. Functions as a scaffolding element in the nuclear phase of the NPC essential for normal nucleocytoplasmic transport of proteins and mRNAs, plays a role in the establishment of nuclear-peripheral chromatin compartmentalization in interphase, and in the mitotic spindle checkpoint signaling during mitosis. Involved in the quality control and retention of unspliced mRNAs in the nucleus; in association with NUP153, regulates the nuclear export of unspliced mRNA species bearing constitutive transport element (CTE) in a NXF1- and KHDRBS1-independent manner. Negatively regulates both the association of CTE-containing mRNA with large polyribosomes and translation initiation. Does not play any role in Rev response element (RRE)-mediated export of unspliced mRNAs. Implicated in nuclear export of mRNAs transcribed from heat shock gene promoters; associates both with chromatin in the HSP70 promoter and with mRNAs transcribed from this promoter under stress-induced conditions. Plays a limited role in the regulation of nuclear protein export. Modulates the nucleocytoplasmic transport of activated MAPK1/ERK2 and huntingtin/HTT and may serve as a docking site for the XPO1/CRM1-mediated nuclear export complex. Also plays a role as a structural and functional element of the perinuclear chromatin distribution; involved in the formation and/or maintenance of NPC-associated perinuclear heterochromatin exclusion zones (HEZs). Finally, acts as a spatial regulator of the spindle-assembly checkpoint (SAC) response ensuring a timely and effective recruitment of spindle checkpoint proteins like MAD1L1 and MAD2L1 to unattached kinetochore during the metaphase-anaphase transition before chromosome congression. Its N-terminus is involved in activation of oncogenic kinases. This Mus musculus (Mouse) protein is Nucleoprotein TPR.